The chain runs to 291 residues: Lipoyl synthase (291 aa).

Positions 43, 48, 54, 69, 73, 76, and 280 each coordinate [4Fe-4S] cluster. The region spanning 55-269 (FSSRTATFLI…AAYGRARGIP (215 aa)) is the Radical SAM core domain.

The protein belongs to the radical SAM superfamily. Lipoyl synthase family. The cofactor is [4Fe-4S] cluster.

Its subcellular location is the cytoplasm. It carries out the reaction [[Fe-S] cluster scaffold protein carrying a second [4Fe-4S](2+) cluster] + N(6)-octanoyl-L-lysyl-[protein] + 2 oxidized [2Fe-2S]-[ferredoxin] + 2 S-adenosyl-L-methionine + 4 H(+) = [[Fe-S] cluster scaffold protein] + N(6)-[(R)-dihydrolipoyl]-L-lysyl-[protein] + 4 Fe(3+) + 2 hydrogen sulfide + 2 5'-deoxyadenosine + 2 L-methionine + 2 reduced [2Fe-2S]-[ferredoxin]. The protein operates within protein modification; protein lipoylation via endogenous pathway; protein N(6)-(lipoyl)lysine from octanoyl-[acyl-carrier-protein]: step 2/2. In terms of biological role, catalyzes the radical-mediated insertion of two sulfur atoms into the C-6 and C-8 positions of the octanoyl moiety bound to the lipoyl domains of lipoate-dependent enzymes, thereby converting the octanoylated domains into lipoylated derivatives. This chain is Lipoyl synthase, found in Oleidesulfovibrio alaskensis (strain ATCC BAA-1058 / DSM 17464 / G20) (Desulfovibrio alaskensis).